The sequence spans 299 residues: MGYVRTGILMAVMTALFLGVGALIGGQSGAIIALIVAALMNLFTFWNSDKAVLSMHGAHEVDPRAAPDLHAMVRGLAERAGMPMPRLYLIETDQPNAFATGRNPENAAVAVTRGLLRALSPEEVAGVVAHELAHIKNRDTLLMTVTATFAGAISMLANFAFFFGGGSNQEGERPVGIVGTLALMILAPLAAGLVQMAISRSREYEADRIGAEICGRPLWLASALGKIEGLARRIDNTRAERNPATAHMFIINPLHAMSHDRLFATHPNTANRIAALQAMAGAGVERSSMPRVPRRGPWR.

Transmembrane regions (helical) follow at residues 7-24 (GILMAVMTALFLGVGALI) and 29-46 (GAIIALIVAALMNLFTFW). Zn(2+) is bound at residue H130. Residue E131 is part of the active site. Position 134 (H134) interacts with Zn(2+). Transmembrane regions (helical) follow at residues 145–165 (VTATFAGAISMLANFAFFFGG) and 174–194 (PVGIVGTLALMILAPLAAGLV). Residue E203 participates in Zn(2+) binding.

The protein belongs to the peptidase M48B family. Requires Zn(2+) as cofactor.

It is found in the cell inner membrane. The sequence is that of Protease HtpX homolog from Cereibacter sphaeroides (strain ATCC 17025 / ATH 2.4.3) (Rhodobacter sphaeroides).